A 354-amino-acid polypeptide reads, in one-letter code: MSEPLKPRIDFEQPLQPIDEPVLKAAQAFDQHAAENFYPADPELDAENEEGRVEGLVNAALKPKRSLWRKMVTVGIALFGVSVIAQSVQWVNQAWQQQDWIALGATTAGGLIVLAGVGSVVTEWRRLYRLRQRAEERDIARELLVSHGIGQGRAFCEKLARQAGLDQGHPALQRWQASLHETHNDREVVELYAKLVQPSLDNLARAEISRYAAESALMIAVSPLALVDMAFIAWRNIRLINRIAALYGIELGYFSRIRLFRLVLLNIAFAGASELVREVGMDWLSQDLAARLSARAAQGIGAGLLTARLGIKAMELCRPLPWLGDDKPKLGDFRRQLIGQLKNTLPKKDKPAQQ.

3 helical membrane-spanning segments follow: residues 71–91 (MVTVGIALFGVSVIAQSVQWV), 101–121 (IALGATTAGGLIVLAGVGSVV), and 214–234 (ESALMIAVSPLALVDMAFIAW).

It belongs to the UPF0283 family.

It localises to the cell inner membrane. The polypeptide is UPF0283 protein YcjF (ycjF) (Yersinia enterocolitica).